Here is a 545-residue protein sequence, read N- to C-terminus: Chaperonin GroEL (545 aa).

ATP contacts are provided by residues 29–32, K50, 86–90, G414, 477–479, and D493; these read TMGP, DGTTT, and DAA.

Belongs to the chaperonin (HSP60) family. In terms of assembly, forms a cylinder of 14 subunits composed of two heptameric rings stacked back-to-back. Interacts with the co-chaperonin GroES.

The protein resides in the cytoplasm. The catalysed reaction is ATP + H2O + a folded polypeptide = ADP + phosphate + an unfolded polypeptide.. Its function is as follows. Together with its co-chaperonin GroES, plays an essential role in assisting protein folding. The GroEL-GroES system forms a nano-cage that allows encapsulation of the non-native substrate proteins and provides a physical environment optimized to promote and accelerate protein folding. The polypeptide is Chaperonin GroEL (Campylobacter jejuni subsp. jejuni serotype O:6 (strain 81116 / NCTC 11828)).